The following is a 302-amino-acid chain: UDP-3-O-acyl-N-acetylglucosamine deacetylase (302 aa).

Zn(2+)-binding residues include H82, H238, and D242. Catalysis depends on H265, which acts as the Proton donor.

The protein belongs to the LpxC family. The cofactor is Zn(2+).

It carries out the reaction a UDP-3-O-[(3R)-3-hydroxyacyl]-N-acetyl-alpha-D-glucosamine + H2O = a UDP-3-O-[(3R)-3-hydroxyacyl]-alpha-D-glucosamine + acetate. Its pathway is glycolipid biosynthesis; lipid IV(A) biosynthesis; lipid IV(A) from (3R)-3-hydroxytetradecanoyl-[acyl-carrier-protein] and UDP-N-acetyl-alpha-D-glucosamine: step 2/6. Functionally, catalyzes the hydrolysis of UDP-3-O-myristoyl-N-acetylglucosamine to form UDP-3-O-myristoylglucosamine and acetate, the committed step in lipid A biosynthesis. In Leptospira biflexa serovar Patoc (strain Patoc 1 / Ames), this protein is UDP-3-O-acyl-N-acetylglucosamine deacetylase.